A 272-amino-acid chain; its full sequence is Orotidine 5'-phosphate decarboxylase (272 aa).

Lysine 95 functions as the Proton donor in the catalytic mechanism.

Belongs to the OMP decarboxylase family. Type 2 subfamily.

It catalyses the reaction orotidine 5'-phosphate + H(+) = UMP + CO2. It functions in the pathway pyrimidine metabolism; UMP biosynthesis via de novo pathway; UMP from orotate: step 2/2. In Cupriavidus metallidurans (strain ATCC 43123 / DSM 2839 / NBRC 102507 / CH34) (Ralstonia metallidurans), this protein is Orotidine 5'-phosphate decarboxylase.